Here is a 124-residue protein sequence, read N- to C-terminus: MSLLRCRQQTLPSLCLSVLFLACFVASMPTESLTPTPGPENSRWSLVRARVMEMVEPLVTRTRDRWRWFWGPRAIQGFVQTYYEDHLKDLGPRTQAWLQSSRDHLLNKTHSLCPRLLCRDWTQG.

A signal peptide spans 1 to 27 (MSLLRCRQQTLPSLCLSVLFLACFVAS).

The protein belongs to the apolipoprotein C4 family.

It localises to the secreted. In terms of biological role, may participate in lipoprotein metabolism. The sequence is that of Apolipoprotein C-IV (Apoc4) from Rattus norvegicus (Rat).